The sequence spans 114 residues: Nucleoid-associated protein THEYE_A1069 (114 aa).

It belongs to the YbaB/EbfC family. As to quaternary structure, homodimer.

Its subcellular location is the cytoplasm. It localises to the nucleoid. In terms of biological role, binds to DNA and alters its conformation. May be involved in regulation of gene expression, nucleoid organization and DNA protection. This Thermodesulfovibrio yellowstonii (strain ATCC 51303 / DSM 11347 / YP87) protein is Nucleoid-associated protein THEYE_A1069.